The sequence spans 760 residues: MOXD1 homolog 2 (760 aa).

A disordered region spans residues 1 to 34 (MAHPRKAVATPATLQLGPPAQTAQSPAATLRHSR). A compositionally biased stretch (low complexity) spans 18–34 (PPAQTAQSPAATLRHSR). A helical membrane pass occupies residues 47-67 (CFISCHTFNLFLLLLLLASGV). Residues Asn78, Asn198, and Asn223 are each glycosylated (N-linked (GlcNAc...) asparagine). Residues 117 to 233 (DDFRILWQII…DTMRLLYMYH (117 aa)) enclose the DOMON domain. Disulfide bonds link Cys339/Cys367, Cys467/Cys581, and Cys543/Cys565. Residue Asn668 is glycosylated (N-linked (GlcNAc...) asparagine). Residues 678–701 (RCKPKRPLAPPTERTAPPPASDLS) are disordered. A helical membrane pass occupies residues 740–760 (FISCLLWLGASSWWLLLMLRT).

Belongs to the copper type II ascorbate-dependent monooxygenase family.

It localises to the membrane. This Drosophila melanogaster (Fruit fly) protein is MOXD1 homolog 2 (olf413).